We begin with the raw amino-acid sequence, 737 residues long: tRNA-dihydrouridine(47) synthase [NAD(P)(+)] (737 aa).

2 stretches are compositionally biased toward basic and acidic residues: residues Met-1–Ile-11 and Pro-24–Asp-33. The segment at Met-1–Asn-127 is disordered. Over residues Pro-35 to Ser-44 the composition is skewed to low complexity. Positions Glu-57 to Tyr-82 are enriched in basic and acidic residues. 2 C3H1-type zinc fingers span residues Cys-142 to His-166 and Cys-187 to His-208. FMN-binding positions include Pro-332–Thr-334 and Gln-407. Cys-439 (proton donor) is an active-site residue. FMN contacts are provided by residues Lys-479, His-520, Asn-577–Asp-579, and Gly-601–Arg-602.

It belongs to the Dus family. Dus3 subfamily. FMN serves as cofactor.

The protein localises to the cytoplasm. Its subcellular location is the nucleus. The enzyme catalyses 5,6-dihydrouridine(47) in tRNA + NAD(+) = uridine(47) in tRNA + NADH + H(+). The catalysed reaction is 5,6-dihydrouridine(47) in tRNA + NADP(+) = uridine(47) in tRNA + NADPH + H(+). It carries out the reaction a 5,6-dihydrouridine in mRNA + NAD(+) = a uridine in mRNA + NADH + H(+). It catalyses the reaction a 5,6-dihydrouridine in mRNA + NADP(+) = a uridine in mRNA + NADPH + H(+). In terms of biological role, catalyzes the synthesis of dihydrouridine, a modified base found in the D-loop of most tRNAs. Specifically modifies U47 in cytoplasmic tRNAs. Catalyzes the synthesis of dihydrouridine in some mRNAs, thereby affecting their translation. This chain is tRNA-dihydrouridine(47) synthase [NAD(P)(+)] (dus-3), found in Neurospora crassa (strain ATCC 24698 / 74-OR23-1A / CBS 708.71 / DSM 1257 / FGSC 987).